The primary structure comprises 271 residues: 3-methyl-2-oxobutanoate hydroxymethyltransferase (271 aa).

Mg(2+) contacts are provided by Asp53 and Asp92. 3-methyl-2-oxobutanoate-binding positions include 53–54 (DS), Asp92, and Lys120. A Mg(2+)-binding site is contributed by Glu122. The active-site Proton acceptor is the Glu189.

It belongs to the PanB family. Homodecamer; pentamer of dimers. Requires Mg(2+) as cofactor.

The protein localises to the cytoplasm. It carries out the reaction 3-methyl-2-oxobutanoate + (6R)-5,10-methylene-5,6,7,8-tetrahydrofolate + H2O = 2-dehydropantoate + (6S)-5,6,7,8-tetrahydrofolate. It participates in cofactor biosynthesis; (R)-pantothenate biosynthesis; (R)-pantoate from 3-methyl-2-oxobutanoate: step 1/2. Its function is as follows. Catalyzes the reversible reaction in which hydroxymethyl group from 5,10-methylenetetrahydrofolate is transferred onto alpha-ketoisovalerate to form ketopantoate. This Burkholderia vietnamiensis (strain G4 / LMG 22486) (Burkholderia cepacia (strain R1808)) protein is 3-methyl-2-oxobutanoate hydroxymethyltransferase.